We begin with the raw amino-acid sequence, 281 residues long: Putrescine transport system permease protein PotI (281 aa).

Residues 1–13 are Cytoplasmic-facing; sequence MNNLPVVRSPWRI. The helical transmembrane segment at 14–33 threads the bilayer; it reads VILLLGFTFLYAPMLMLVIY. The Periplasmic portion of the chain corresponds to 34–68; the sequence is SFNSSKLVTVWAGWSTRWYGELLRDDAMMSAVGLS. Residues 65–260 enclose the ABC transmembrane type-1 domain; the sequence is VGLSLTIAAC…GAVGIVGFIA (196 aa). Residues 69 to 88 form a helical membrane-spanning segment; that stretch reads LTIAACAATAAAILGTIAAV. Residues 89–115 lie on the Cytoplasmic side of the membrane; it reads VLVRFGRFRGSNGFAFMITAPLVMPDV. The chain crosses the membrane as a helical span at residues 116-135; the sequence is ITGLSLLLLFVALAHAIGWP. Residues 136-140 are Periplasmic-facing; it reads ADRGM. The chain crosses the membrane as a helical span at residues 141–160; that stretch reads LTIWLAHVTFCTAYVAVVIS. Residues 161–186 lie on the Cytoplasmic side of the membrane; sequence SRLRELDRSIEEAAMDLGATPLKVFF. The chain crosses the membrane as a helical span at residues 187–206; the sequence is VITLPMIMPAIISGWLLAFT. Residues 207–243 lie on the Periplasmic side of the membrane; that stretch reads LSLDDLVIASFVSGPGATTLPMLVFSSVRMGVNPEIN. Residues 244–263 form a helical membrane-spanning segment; the sequence is ALATLILGAVGIVGFIAWYL. The Cytoplasmic portion of the chain corresponds to 264–281; that stretch reads MARAEKQRIRDIQRARRG.

Belongs to the binding-protein-dependent transport system permease family. CysTW subfamily. The complex is composed of two ATP-binding proteins (PotG), two transmembrane proteins (PotH and PotI) and a solute-binding protein (PotF).

The protein resides in the cell inner membrane. In terms of biological role, part of the ABC transporter complex PotFGHI involved in putrescine uptake. Responsible for the translocation of the substrate across the membrane. The chain is Putrescine transport system permease protein PotI from Escherichia coli O6:H1 (strain CFT073 / ATCC 700928 / UPEC).